The primary structure comprises 538 residues: Putative outer membrane porin BglH (538 aa).

The signal sequence occupies residues 1–25 (MFRRNIITSAILLMAPLAFSAQSLA).

Belongs to the porin LamB (TC 1.B.3) family.

The protein resides in the cell outer membrane. May be a sugar porin with a broad carbohydrate specificity. The sequence is that of Putative outer membrane porin BglH (bglH) from Escherichia coli (strain UTI89 / UPEC).